A 207-amino-acid polypeptide reads, in one-letter code: MPKVALYNQNGQTVGEIELNDAVFGIEPNKHVLFEAVIMQRASMRQGTHKTKNRAEVSGGGRKPWRQKGTGRARQGSIRAPQWRGGGTVFGPVPRSYSYKLPKKVRRLAIKSALSSKVLENDIVVLDQLSLEAPKTKEMVKILNNLSVDRKALIVTDELNENVYLSARNIPGVKVVAANGINVLDVLNHDKLVITKAAVEKVEEVLA.

The segment at 44-78 (MRQGTHKTKNRAEVSGGGRKPWRQKGTGRARQGSI) is disordered.

This sequence belongs to the universal ribosomal protein uL4 family. As to quaternary structure, part of the 50S ribosomal subunit.

One of the primary rRNA binding proteins, this protein initially binds near the 5'-end of the 23S rRNA. It is important during the early stages of 50S assembly. It makes multiple contacts with different domains of the 23S rRNA in the assembled 50S subunit and ribosome. In terms of biological role, forms part of the polypeptide exit tunnel. This is Large ribosomal subunit protein uL4 from Geobacillus kaustophilus (strain HTA426).